We begin with the raw amino-acid sequence, 231 residues long: MVQKIGILGAMREEITPILELFGVDFEEIPLGGNVFHKGVYHNKEIIVAYSKIGKVHSTLTTTSMILAFGVQKVLFSGVAGSLVKDLKINDLLVAIQLVQHDVDLSAFDHPLGFIPESAIFIETSESLNALAKEVANEQHIVLKEGVIASGDQFVHSKERKEFLVSEFKASAVEMEGASVAFVCQKFGVPCCVLRSISDNADEEANMSFDAFLEKSAQTSAKFLKSMVDEL.

Catalysis depends on E14, which acts as the Proton acceptor. Substrate contacts are provided by residues G81, V155, and M175–E176. Residue D199 is the Proton donor of the active site.

It belongs to the PNP/UDP phosphorylase family. Homodimer.

The enzyme catalyses 6-amino-6-deoxyfutalosine + H2O = dehypoxanthine futalosine + adenine. The catalysed reaction is S-adenosyl-L-homocysteine + H2O = S-(5-deoxy-D-ribos-5-yl)-L-homocysteine + adenine. It catalyses the reaction S-methyl-5'-thioadenosine + H2O = 5-(methylsulfanyl)-D-ribose + adenine. It carries out the reaction 5'-deoxyadenosine + H2O = 5-deoxy-D-ribose + adenine. The protein operates within quinol/quinone metabolism; menaquinone biosynthesis. It participates in amino-acid biosynthesis; L-methionine biosynthesis via salvage pathway; S-methyl-5-thio-alpha-D-ribose 1-phosphate from S-methyl-5'-thioadenosine (hydrolase route): step 1/2. In terms of biological role, catalyzes the direct conversion of aminodeoxyfutalosine (AFL) into dehypoxanthine futalosine (DHFL) and adenine via the hydrolysis of the N-glycosidic bond; this reaction seems to represent an essential step in the menaquinone biosynthesis pathway in Helicobacter species. Can also probably catalyzes the hydrolysis of 5'-methylthioadenosine (MTA) and S-adenosylhomocysteine (SAH) to adenine and the corresponding thioribose, 5'-methylthioribose and S-ribosylhomocysteine, respectively. These other activities highlight the tremendous versatility of the enzyme, which also plays key roles in S-adenosylmethionine recycling and in the biosynthesis of the quorum-sensing molecule autoinducer-2. Does not act on futalosine (FL) as substrate. The polypeptide is Aminodeoxyfutalosine nucleosidase (mtnN) (Helicobacter pylori (strain ATCC 700392 / 26695) (Campylobacter pylori)).